Reading from the N-terminus, the 202-residue chain is Orotate phosphoribosyltransferase (202 aa).

113–121 (EDIITTGGS) lines the 5-phospho-alpha-D-ribose 1-diphosphate pocket. Orotate-binding residues include threonine 117 and arginine 145.

The protein belongs to the purine/pyrimidine phosphoribosyltransferase family. PyrE subfamily. As to quaternary structure, homodimer. It depends on Mg(2+) as a cofactor.

It carries out the reaction orotidine 5'-phosphate + diphosphate = orotate + 5-phospho-alpha-D-ribose 1-diphosphate. Its pathway is pyrimidine metabolism; UMP biosynthesis via de novo pathway; UMP from orotate: step 1/2. In terms of biological role, catalyzes the transfer of a ribosyl phosphate group from 5-phosphoribose 1-diphosphate to orotate, leading to the formation of orotidine monophosphate (OMP). In Campylobacter lari (strain RM2100 / D67 / ATCC BAA-1060), this protein is Orotate phosphoribosyltransferase.